We begin with the raw amino-acid sequence, 188 residues long: Putative protein SSX9 (188 aa).

Residues 20–83 (KIQKAFDDIA…TGATDLQGND (64 aa)) form the KRAB-related domain. The segment at 114-165 (KKPAEVGNDSKEVPEASGLQNDGKQLCPPGKPTTSEKINKASGPKRGKHAWT) is disordered. The span at 115–127 (KPAEVGNDSKEVP) shows a compositional bias: basic and acidic residues. Serine 123 carries the post-translational modification Phosphoserine. Residues 156–165 (GPKRGKHAWT) are compositionally biased toward basic residues.

It belongs to the SSX family. In terms of tissue distribution, not detected in any normal or tumor tissues.

Functionally, could act as a modulator of transcription. The polypeptide is Putative protein SSX9 (Homo sapiens (Human)).